Reading from the N-terminus, the 568-residue chain is DNA mismatch repair protein MutL (568 aa).

This sequence belongs to the DNA mismatch repair MutL/HexB family.

Its function is as follows. This protein is involved in the repair of mismatches in DNA. It is required for dam-dependent methyl-directed DNA mismatch repair. May act as a 'molecular matchmaker', a protein that promotes the formation of a stable complex between two or more DNA-binding proteins in an ATP-dependent manner without itself being part of a final effector complex. This chain is DNA mismatch repair protein MutL, found in Nostoc punctiforme (strain ATCC 29133 / PCC 73102).